Consider the following 202-residue polypeptide: uncharacterized protein (202 aa).

A helical transmembrane segment spans residues 18-38; it reads FLIFLIFLSVLGCGITISGCI.

The protein resides in the membrane. This is an uncharacterized protein from Methanocaldococcus jannaschii (strain ATCC 43067 / DSM 2661 / JAL-1 / JCM 10045 / NBRC 100440) (Methanococcus jannaschii).